We begin with the raw amino-acid sequence, 156 residues long: Envelope glycoprotein L (156 aa).

A signal peptide spans 1-16 (MSPLVAVLVFFSAALG). Residues 21–141 (GVAGNPHGLD…KELGEVAVHK (121 aa)) form an interaction with gH region. Positions 50–156 (ELEWDDEDHP…LRYNGGPPAE (107 aa)) constitute a gL alphaherpesvirus-type domain. A disulfide bond links C71 and C95.

The protein belongs to the herpesviridae glycoprotein L (gL) family. Alphaherpesvirinae gL subfamily. As to quaternary structure, interacts with glycoprotein H (gH); this interaction is necessary for the correct processing and cell surface expression of gH. The heterodimer gH/gL seems to interact with gB trimers during fusion. O-glycosylated, and sialylated.

The protein resides in the virion membrane. It is found in the host cell membrane. Its subcellular location is the host Golgi apparatus. It localises to the host trans-Golgi network. Its function is as follows. The heterodimer glycoprotein H-glycoprotein L is required for the fusion of viral and plasma membranes leading to virus entry into the host cell. Acts as a functional inhibitor of gH and maintains gH in an inhibited form. Upon binding to host integrins, gL dissociates from gH leading to activation of the viral fusion glycoproteins gB and gH. This is Envelope glycoprotein L from Sus scrofa (Pig).